Here is a 210-residue protein sequence, read N- to C-terminus: ATP-dependent Clp protease proteolytic subunit (210 aa).

The Nucleophile role is filled by Ser-107. The active site involves His-132.

Belongs to the peptidase S14 family. Fourteen ClpP subunits assemble into 2 heptameric rings which stack back to back to give a disk-like structure with a central cavity, resembling the structure of eukaryotic proteasomes.

The protein resides in the cytoplasm. It catalyses the reaction Hydrolysis of proteins to small peptides in the presence of ATP and magnesium. alpha-casein is the usual test substrate. In the absence of ATP, only oligopeptides shorter than five residues are hydrolyzed (such as succinyl-Leu-Tyr-|-NHMec, and Leu-Tyr-Leu-|-Tyr-Trp, in which cleavage of the -Tyr-|-Leu- and -Tyr-|-Trp bonds also occurs).. Cleaves peptides in various proteins in a process that requires ATP hydrolysis. Has a chymotrypsin-like activity. Plays a major role in the degradation of misfolded proteins. This Zymomonas mobilis subsp. mobilis (strain ATCC 31821 / ZM4 / CP4) protein is ATP-dependent Clp protease proteolytic subunit.